A 381-amino-acid chain; its full sequence is NF-kappa-B inhibitor-like protein 1 (381 aa).

Residues 1-34 (MSNPSPQAPEEEASTSVCRPQSCSMASASRRHRR) form a disordered region. Residues 14 to 27 (STSVCRPQSCSMAS) are compositionally biased toward polar residues. 2 ANK repeats span residues 64-93 (AGQP…ADPA) and 97-134 (RHGD…IKNK). 2 disordered regions span residues 132–167 (KNKD…REWR) and 186–298 (EDDA…WRFG). Ser151 carries the post-translational modification Phosphoserine. Residues 151–160 (SAEEEEDEEV) show a composition bias toward acidic residues. Composition is skewed to basic and acidic residues over residues 205–218 (RLAR…RQQL) and 237–290 (RQHE…RGAE).

Interacts with CACTIN (via N-terminal domain); the interaction occurs in a pro-inflammatory-independent manner. High expression found in heart muscle, liver, kidney and skin. Not detected in spleen, lung and brain.

The protein localises to the nucleus. Involved in the regulation of innate immune response. Acts as negative regulator of Toll-like receptor and interferon-regulatory factor (IRF) signaling pathways. Contributes to the negative regulation of transcriptional activation of NF-kappa-B target genes in response to endogenous pro-inflammatory stimuli. The polypeptide is NF-kappa-B inhibitor-like protein 1 (Nfkbil1) (Mus musculus (Mouse)).